A 147-amino-acid polypeptide reads, in one-letter code: Small ribosomal subunit protein bS6 (147 aa).

Positions 96–147 (VTEPSPMMKAKEERFTKRDDREERSDRSEAPRAEAPAKAEAPAKAEDEAAAE) are disordered. Basic and acidic residues predominate over residues 104 to 147 (KAKEERFTKRDDREERSDRSEAPRAEAPAKAEAPAKAEDEAAAE).

This sequence belongs to the bacterial ribosomal protein bS6 family.

Binds together with bS18 to 16S ribosomal RNA. This is Small ribosomal subunit protein bS6 from Photobacterium profundum (strain SS9).